The chain runs to 514 residues: Mitochondrial-processing peptidase subunit alpha (514 aa).

The transit peptide at 1–55 (MLLRKSIPYIKICRDISASVRNNKEIAQKLPLSVPLPMENNSKSIEKGCPPMGRN) directs the protein to the mitochondrion.

This sequence belongs to the peptidase M16 family. As to quaternary structure, heterodimer of mppa-1 (alpha) and mppb-1 (beta) subunits, forming the mitochondrial processing protease (MPP) in which mppa-1 is involved in substrate recognition and binding and mppb-1 is the catalytic subunit.

It localises to the mitochondrion matrix. Substrate recognition and binding subunit of the essential mitochondrial processing protease (MPP), which cleaves the mitochondrial sequence off newly imported precursors proteins. This is Mitochondrial-processing peptidase subunit alpha from Caenorhabditis elegans.